Here is a 440-residue protein sequence, read N- to C-terminus: COP9 signalosome complex subunit 5 (440 aa).

The MPN domain occupies 71–218; that stretch reads VLISKLSCEK…MGAFRTIESK (148 aa). Positions 164, 166, and 177 each coordinate Zn(2+). A JAMM motif motif is present at residues 164 to 177; the sequence is HSHPGYDCWLSNID. Polar residues predominate over residues 319-341; sequence TQRGDSTETSSFGSMFSGDNTSD. 2 disordered regions span residues 319–343 and 375–399; these read TQRG…SDVD and SSRS…CHDE.

Belongs to the peptidase M67A family. CSN5 subfamily. In terms of assembly, component of a COP9 signalosome-like (CSN) complex, composed of at least RRI1/CSN5, CSN9, RRI2/CSN10, PCI8/CSN11, CSN12 and CSI1. Within this complex it probably interacts directly with CSN12. Also interacts with RPN5. The cofactor is a divalent metal cation.

The protein resides in the cytoplasm. Its subcellular location is the nucleus. Catalytic component of the COP9 signalosome (CSN) complex that acts as an regulator of the ubiquitin (Ubl) conjugation pathway by mediating the deneddylation of the cullin subunit of SCF-type E3 ubiquitin-protein ligase complexes. The CSN complex is involved in the regulation of the mating pheromone response. The chain is COP9 signalosome complex subunit 5 (RRI1) from Saccharomyces cerevisiae (strain ATCC 204508 / S288c) (Baker's yeast).